The following is a 308-amino-acid chain: Ribosomal RNA small subunit methyltransferase H (308 aa).

Residues 32–34 (GGH), aspartate 51, phenylalanine 78, aspartate 99, and glutamine 106 contribute to the S-adenosyl-L-methionine site.

Belongs to the methyltransferase superfamily. RsmH family.

It localises to the cytoplasm. The enzyme catalyses cytidine(1402) in 16S rRNA + S-adenosyl-L-methionine = N(4)-methylcytidine(1402) in 16S rRNA + S-adenosyl-L-homocysteine + H(+). In terms of biological role, specifically methylates the N4 position of cytidine in position 1402 (C1402) of 16S rRNA. This is Ribosomal RNA small subunit methyltransferase H from Campylobacter curvus (strain 525.92).